Here is a 369-residue protein sequence, read N- to C-terminus: Methionine import ATP-binding protein MetN (369 aa).

The ABC transporter domain maps to 31–266 (VEMKDVRRMF…PQSPVTQSML (236 aa)). An ATP-binding site is contributed by 63 to 70 (GRSGAGKS).

It belongs to the ABC transporter superfamily. Methionine importer (TC 3.A.1.24) family. In terms of assembly, the complex is composed of two ATP-binding proteins (MetN), two transmembrane proteins (MetI) and a solute-binding protein (MetQ).

Its subcellular location is the cell inner membrane. The enzyme catalyses L-methionine(out) + ATP + H2O = L-methionine(in) + ADP + phosphate + H(+). The catalysed reaction is D-methionine(out) + ATP + H2O = D-methionine(in) + ADP + phosphate + H(+). In terms of biological role, part of the ABC transporter complex MetNIQ involved in methionine import. Responsible for energy coupling to the transport system. The protein is Methionine import ATP-binding protein MetN of Brucella abortus (strain 2308).